The chain runs to 377 residues: MSNGIVIIGSGFAARQLVKNIRKQDASIPLTLIAADSMDEYNKPDLSHVISQGQRADDLTRQTAGEFAGQFNLHLFPHTWVTDIDAEAHVVKSQNNQWQYDKLVLATGASAFVPPVPGRELMLTLNSQQEYRACETQLRDARRVLIVGGGLIGSELAMDFCRAGKAVTLIDNAASILASLMPPEVSSRLQHRLTEMGVHLLLKSQLQGLEKTDSGILATLDHQRSIEVDAVIAATGLRPETALARRAGLTINRGVCVDSYLQTSNDDIYALGDCAEINGQVLPFLQPIQLSAMVLAKNLLGNNTPLKLPAMLVKIKTPELPLHLAGETQRQDLRWQINTERQGMVARGVDDADQLRAFVVSEDRMKEAFGLLKTLPM.

This sequence belongs to the FAD-dependent oxidoreductase family. FAD is required as a cofactor.

It is found in the cytoplasm. The catalysed reaction is 2 reduced [nitric oxide reductase rubredoxin domain] + NAD(+) + H(+) = 2 oxidized [nitric oxide reductase rubredoxin domain] + NADH. The protein operates within nitrogen metabolism; nitric oxide reduction. Functionally, one of at least two accessory proteins for anaerobic nitric oxide (NO) reductase. Reduces the rubredoxin moiety of NO reductase. The polypeptide is Nitric oxide reductase FlRd-NAD(+) reductase (Shigella sonnei (strain Ss046)).